The primary structure comprises 168 residues: Large ribosomal subunit protein uL10 (168 aa).

It belongs to the universal ribosomal protein uL10 family. In terms of assembly, part of the ribosomal stalk of the 50S ribosomal subunit. The N-terminus interacts with L11 and the large rRNA to form the base of the stalk. The C-terminus forms an elongated spine to which L12 dimers bind in a sequential fashion forming a multimeric L10(L12)X complex.

Forms part of the ribosomal stalk, playing a central role in the interaction of the ribosome with GTP-bound translation factors. This is Large ribosomal subunit protein uL10 from Ralstonia pickettii (strain 12J).